Consider the following 949-residue polypeptide: ATPase 1, plasma membrane-type (949 aa).

N-acetylserine is present on S2. Residues 2–61 (SGLEDIKNETVDLEKIPIEEVFQQLKCTREGLTTQEGEDRIVIFGPNKLEEKKESKILKF) lie on the Cytoplasmic side of the membrane. The chain crosses the membrane as a helical span at residues 62 to 81 (LGFMWNPLSWVMEAAALMAI). Topologically, residues 82–93 (ALANGDNRPPDW) are extracellular. Residues 94-114 (QDFVGIICLLVINSTISFIEE) traverse the membrane as a helical segment. Over 115–243 (NNAGNAAAAL…GHFQKVLTSI (129 aa)) the chain is Cytoplasmic. The helical transmembrane segment at 244-264 (GNFCICSIAIGIAIEIVVMYP) threads the bilayer. The Extracellular portion of the chain corresponds to 265–273 (IQHRKYRDG). Residues 274 to 291 (IDNLLVLLIGGIPIAMPT) traverse the membrane as a helical segment. Over 292–643 (VLSVTMAIGS…TSRAIFQRMK (352 aa)) the chain is Cytoplasmic. The 4-aspartylphosphate intermediate role is filled by D329. 2 residues coordinate Mg(2+): D588 and D592. Residues 644-665 (NYTIYAVSITIRIVFGFMLIAL) traverse the membrane as a helical segment. The Extracellular portion of the chain corresponds to 666-670 (IWEFD). The helical transmembrane segment at 671–693 (FSAFMVLIIAILNDGTIMTISKD) threads the bilayer. Residues 694–709 (RVKPSPTPDSWKLKEI) are Cytoplasmic-facing. A helical transmembrane segment spans residues 710–730 (FATGIVLGGYQAIMSVIFFWA). At 731–751 (AHKTDFFSDKFGVRSIRDNND) the chain is on the extracellular side. The helical transmembrane segment at 752–772 (ELMGAVYLQVSIISQALIFVT) threads the bilayer. Residues 773 to 784 (RSRSWSFVERPG) are Cytoplasmic-facing. A helical membrane pass occupies residues 785-805 (ALLMIAFVIAQLVATLIAVYA). Residues 806–813 (DWTFAKVK) lie on the Extracellular side of the membrane. Residues 814-834 (GIGWGWAGVIWIYSIVTYFPQ) form a helical membrane-spanning segment. Residues 835 to 949 (DILKFAIRYI…IDTAGHHYTV (115 aa)) lie on the Cytoplasmic side of the membrane. Phosphothreonine is present on T881. Phosphoserine is present on residues S899 and S931. Residues 947-949 (YTV) form an interaction with 14-3-3 proteins region. Phosphothreonine is present on T948.

It belongs to the cation transport ATPase (P-type) (TC 3.A.3) family. Type IIIA subfamily. Binds to 14-3-3 proteins. The binding is induced by phosphorylation of Thr-948. Binding to 14-3-3 proteins activates the H(+)-ATPase. Interacts with PPI1; this interaction promotes ATPase activity. Interacts with PSY1R. Part of a functional complex containing PSKR1, BAK1, CNGC17, and AHA. Interacts with CNGC17 and PSKR1. Triggered by SAUR9 via the phosphorylation of the C-terminal autoinhibitory domain. Interacts with AHA2. Binds to CBC1 and CBC2. In terms of processing, phosphorylated, probably by PHOT1 and PHOT2, at C-terminal Thr-948 in guard cells in response to blue light to induce stomatal opening. Expressed in guard cells, mesophyll cells, leaves and roots.

The protein resides in the cell membrane. It carries out the reaction ATP + H2O + H(+)(in) = ADP + phosphate + 2 H(+)(out). Phosphorylation on Thr residues is repressed by tyrphostin 9, sphingosine, GW5074 and BML-265. By contrast, the fungal phytotoxin fusicoccin (FC) promotes phosphorylation of Thr-948 independently to BHP, thus leading to large stomatal opening. The plasma membrane H(+) ATPase of plants and fungi generates a proton gradient that drives the active transport of nutrients by H(+)-symport. The resulting external acidification and/or internal alkinization may mediate growth responses. Forms a functional cation-translocating unit with CNGC17 that is activated by PSKR1/BAK1 and possibly other BAK1/RLK complexes. Promotes stomatal opening in response to blue light. The polypeptide is ATPase 1, plasma membrane-type (Arabidopsis thaliana (Mouse-ear cress)).